Here is a 218-residue protein sequence, read N- to C-terminus: Ornithine decarboxylase antizyme 2 (218 aa).

The protein belongs to the ODC antizyme family. Interacts with ODC1 and thereby sterically blocks ODC homodimerization. As to expression, expressed ubiquitously in 24 hours embryos, with highest levels in telencephalon, lens, retina, cerebellum and hindbrain primordia.

In terms of biological role, ornithine decarboxylase (ODC) antizyme protein that negatively regulates ODC activity and intracellular polyamine biosynthesis and uptake in response to increased intracellular polyamine levels. Binds to ODC monomers, inhibiting the assembly of the functional ODC homodimers. Does not target the ODC monomers for degradation, which allows a protein synthesis-independent restoration of ODC activity. In Danio rerio (Zebrafish), this protein is Ornithine decarboxylase antizyme 2 (oaz1b).